The following is a 165-amino-acid chain: SsrA-binding protein (165 aa).

The tract at residues 141 to 165 is disordered; that stretch reads KLHDKRQDEKRKQADREVKSALARY. Over residues 145 to 159 the composition is skewed to basic and acidic residues; the sequence is KRQDEKRKQADREVK.

It belongs to the SmpB family.

Its subcellular location is the cytoplasm. Required for rescue of stalled ribosomes mediated by trans-translation. Binds to transfer-messenger RNA (tmRNA), required for stable association of tmRNA with ribosomes. tmRNA and SmpB together mimic tRNA shape, replacing the anticodon stem-loop with SmpB. tmRNA is encoded by the ssrA gene; the 2 termini fold to resemble tRNA(Ala) and it encodes a 'tag peptide', a short internal open reading frame. During trans-translation Ala-aminoacylated tmRNA acts like a tRNA, entering the A-site of stalled ribosomes, displacing the stalled mRNA. The ribosome then switches to translate the ORF on the tmRNA; the nascent peptide is terminated with the 'tag peptide' encoded by the tmRNA and targeted for degradation. The ribosome is freed to recommence translation, which seems to be the essential function of trans-translation. The protein is SsrA-binding protein of Prochlorococcus marinus (strain MIT 9313).